Reading from the N-terminus, the 280-residue chain is Gem-associated protein 2 (280 aa).

A may play a minor inhibitory role in snRNA binding to 5Sm (SNRPD1, SNRPD2, SNRPE, SNRPF and SNRPG) during snRNP assembly by inserting into the RNA binding pocket of 5Sm region spans residues 1–39; it reads MRRAELAGLKTMAWVPAESAVEELMPRLLPVEPCDLTEG. Phosphoserine is present on residues Ser-81 and Ser-166.

The protein belongs to the gemin-2 family. Monomer. Part of the core SMN complex that contains SMN1, GEMIN2/SIP1, DDX20/GEMIN3, GEMIN4, GEMIN5, GEMIN6, GEMIN7, GEMIN8 and STRAP/UNRIP. Part of the SMN-Sm complex that contains SMN1, GEMIN2/SIP1, DDX20/GEMIN3, GEMIN4, GEMIN5, GEMIN6, GEMIN7, GEMIN8, STRAP/UNRIP and the Sm proteins SNRPB, SNRPD1, SNRPD2, SNRPD3, SNRPE, SNRPF and SNRPG. Interacts with GEMIN5; the interaction is direct. Interacts (via C-terminus) with SMN1; the interaction is direct. Interacts with SNRPD1; the interaction is direct. Interacts with SNRPD2; the interaction is direct. Interacts (via N-terminus) with SNRPF; the interaction is direct. Interacts (via N-terminus) with SNRPE; the interaction is direct. Interacts (via N-terminus) with SNRPG; the interaction is direct.

It localises to the nucleus. The protein resides in the gem. The protein localises to the cytoplasm. Its function is as follows. The SMN complex catalyzes the assembly of small nuclear ribonucleoproteins (snRNPs), the building blocks of the spliceosome, and thereby plays an important role in the splicing of cellular pre-mRNAs. Most spliceosomal snRNPs contain a common set of Sm proteins SNRPB, SNRPD1, SNRPD2, SNRPD3, SNRPE, SNRPF and SNRPG that assemble in a heptameric protein ring on the Sm site of the small nuclear RNA to form the core snRNP (Sm core). In the cytosol, the Sm proteins SNRPD1, SNRPD2, SNRPE, SNRPF and SNRPG (5Sm) are trapped in an inactive 6S pICln-Sm complex by the chaperone CLNS1A that controls the assembly of the core snRNP. To assemble core snRNPs, the SMN complex accepts the trapped 5Sm proteins from CLNS1A. Binding of snRNA inside 5Sm ultimately triggers eviction of the SMN complex, thereby allowing binding of SNRPD3 and SNRPB to complete assembly of the core snRNP. Within the SMN complex, GEMIN2 constrains the conformation of 5Sm, thereby promoting 5Sm binding to snRNA containing the snRNP code (a nonameric Sm site and a 3'-adjacent stem-loop), thus preventing progression of assembly until a cognate substrate is bound. The protein is Gem-associated protein 2 of Homo sapiens (Human).